The primary structure comprises 224 residues: Urease accessory protein UreF (224 aa).

This sequence belongs to the UreF family. As to quaternary structure, ureD, UreF and UreG form a complex that acts as a GTP-hydrolysis-dependent molecular chaperone, activating the urease apoprotein by helping to assemble the nickel containing metallocenter of UreC. The UreE protein probably delivers the nickel.

The protein localises to the cytoplasm. Functionally, required for maturation of urease via the functional incorporation of the urease nickel metallocenter. The protein is Urease accessory protein UreF of Escherichia coli O157:H7.